Reading from the N-terminus, the 321-residue chain is Olfactory receptor 5P60 (321 aa).

The Extracellular portion of the chain corresponds to 1-28; sequence MAFLHNGNHTAVTEFILLGLTDDPVLRI. The N-linked (GlcNAc...) asparagine glycan is linked to Asn8. A helical transmembrane segment spans residues 29–49; the sequence is VLFTIILCIYLVTVSGNLSTI. Residues 50–57 lie on the Cytoplasmic side of the membrane; that stretch reads LLIRVSSQ. Residues 58 to 78 form a helical membrane-spanning segment; it reads LHHPMYFFLSHLASADIGYSS. Topologically, residues 79 to 102 are extracellular; sequence SVTPNMLVNFLVKQNTISYIGCSI. A disulfide bridge links Cys100 with Cys192. Residues 103–123 traverse the membrane as a helical segment; the sequence is QFGSAAFFGGLECFLLAVMAY. At 124–136 the chain is on the cytoplasmic side; that stretch reads DRFVAICNPLLYS. Residues 137–157 traverse the membrane as a helical segment; sequence TKMSTQVCVQLVVGSYIGGFL. The Extracellular portion of the chain corresponds to 158 to 199; the sequence is NASFATVSFLFLFFCGPNIINHFFCDFAPLIELSCSDVRISV. A helical membrane pass occupies residues 200–220; it reads LVTSFSAGTVTMLTVLVIAIS. Over 221 to 240 the chain is Cytoplasmic; the sequence is YTYILITILKMRSTEGRHKA. The helical transmembrane segment at 241–261 threads the bilayer; sequence FSTCTSHLTAVSLFYGTITFI. Over 262-274 the chain is Extracellular; it reads YVMPKSRYSTDQN. Residues 275-295 form a helical membrane-spanning segment; sequence KVVSVFYMVVIPMLNPLIYSL. Residues 296–321 lie on the Cytoplasmic side of the membrane; it reads RNNEIKGALRRHLGKKIFSQSNILFY.

The protein belongs to the G-protein coupled receptor 1 family.

Its subcellular location is the cell membrane. Potential odorant receptor. The protein is Olfactory receptor 5P60 of Mus musculus (Mouse).